The following is a 292-amino-acid chain: Glycine--tRNA ligase alpha subunit (292 aa).

Belongs to the class-II aminoacyl-tRNA synthetase family. As to quaternary structure, tetramer of two alpha and two beta subunits.

The protein resides in the cytoplasm. The enzyme catalyses tRNA(Gly) + glycine + ATP = glycyl-tRNA(Gly) + AMP + diphosphate. In Synechococcus sp. (strain ATCC 27144 / PCC 6301 / SAUG 1402/1) (Anacystis nidulans), this protein is Glycine--tRNA ligase alpha subunit.